Consider the following 241-residue polypeptide: Large ribosomal subunit protein uL3 (241 aa).

The tract at residues 140 to 168 (SHRSIGSTGGRQDPGKTFKNKKMPGHMGD) is disordered. N5-methylglutamine is present on Q151.

It belongs to the universal ribosomal protein uL3 family. As to quaternary structure, part of the 50S ribosomal subunit. Forms a cluster with proteins L14 and L19. Methylated by PrmB.

In terms of biological role, one of the primary rRNA binding proteins, it binds directly near the 3'-end of the 23S rRNA, where it nucleates assembly of the 50S subunit. This is Large ribosomal subunit protein uL3 from Azorhizobium caulinodans (strain ATCC 43989 / DSM 5975 / JCM 20966 / LMG 6465 / NBRC 14845 / NCIMB 13405 / ORS 571).